The sequence spans 326 residues: Probable cell division protein WhiA (326 aa).

A DNA-binding region (H-T-H motif) is located at residues 275-308; sequence SLEELGALADPPLTKDAIAGRIRRLLALADKRAR.

This sequence belongs to the WhiA family.

Functionally, involved in cell division and chromosome segregation. This is Probable cell division protein WhiA from Salinispora arenicola (strain CNS-205).